The following is a 642-amino-acid chain: ATP-dependent zinc metalloprotease FtsH (642 aa).

Topologically, residues 1 to 6 (MGRFTK) are cytoplasmic. Residues 7–27 (NIVLYLLIIAAFVIAIDAFSG) traverse the membrane as a helical segment. Topologically, residues 28–101 (QSANKSELSY…TAAPPEQPAW (74 aa)) are extracellular. Residues 102-122 (WMSLLGSAIPIIILVVLFFFI) form a helical membrane-spanning segment. Over 123-642 (MQQTQGGGGR…LSEASSNEIK (520 aa)) the chain is Cytoplasmic. 194–201 (GPPGTGKT) contributes to the ATP binding site. H416 lines the Zn(2+) pocket. The active site involves E417. 2 residues coordinate Zn(2+): H420 and D492. The span at 597–610 (TTKEPEAEEPKVAS) shows a compositional bias: basic and acidic residues. The tract at residues 597–642 (TTKEPEAEEPKVASEADSSIVPEGVDAKKTTSTVADLSEASSNEIK) is disordered. The span at 626-642 (TTSTVADLSEASSNEIK) shows a compositional bias: polar residues.

In the central section; belongs to the AAA ATPase family. This sequence in the C-terminal section; belongs to the peptidase M41 family. Homohexamer. Zn(2+) serves as cofactor.

Its subcellular location is the cell membrane. In terms of biological role, acts as a processive, ATP-dependent zinc metallopeptidase for both cytoplasmic and membrane proteins. Plays a role in the quality control of integral membrane proteins. In Veillonella parvula (strain ATCC 10790 / DSM 2008 / CCUG 5123 / JCM 12972 / NCTC 11810 / Te3) (Veillonella alcalescens), this protein is ATP-dependent zinc metalloprotease FtsH.